Reading from the N-terminus, the 688-residue chain is UvrABC system protein B (688 aa).

One can recognise a Helicase ATP-binding domain in the interval 41–429; the sequence is ANFEAGLAKQ…AGEVTELVVR (389 aa). 54–61 is a binding site for ATP; it reads GVTGSGKT. The Beta-hairpin motif lies at 107–130; sequence YYDYYQPEAYVPSSDTFIEKDSSI. Residues 446-612 enclose the Helicase C-terminal domain; the sequence is QVDDLMSEIH…SVERPISDIM (167 aa). The segment at 616 to 646 is disordered; it reads REDAAEKKSGKGRSKSRQVAEETPDYRAMKP. A compositionally biased stretch (basic and acidic residues) spans 633–645; that stretch reads QVAEETPDYRAMK. The 36-residue stretch at 650 to 685 folds into the UVR domain; the sequence is AGKLKSLEQKMYQHAKDLEFEAAAQIRDQIQKLKTA.

The protein belongs to the UvrB family. As to quaternary structure, forms a heterotetramer with UvrA during the search for lesions. Interacts with UvrC in an incision complex.

The protein resides in the cytoplasm. Its function is as follows. The UvrABC repair system catalyzes the recognition and processing of DNA lesions. A damage recognition complex composed of 2 UvrA and 2 UvrB subunits scans DNA for abnormalities. Upon binding of the UvrA(2)B(2) complex to a putative damaged site, the DNA wraps around one UvrB monomer. DNA wrap is dependent on ATP binding by UvrB and probably causes local melting of the DNA helix, facilitating insertion of UvrB beta-hairpin between the DNA strands. Then UvrB probes one DNA strand for the presence of a lesion. If a lesion is found the UvrA subunits dissociate and the UvrB-DNA preincision complex is formed. This complex is subsequently bound by UvrC and the second UvrB is released. If no lesion is found, the DNA wraps around the other UvrB subunit that will check the other stand for damage. The polypeptide is UvrABC system protein B (Xanthomonas oryzae pv. oryzae (strain KACC10331 / KXO85)).